The primary structure comprises 1097 residues: RE1-silencing transcription factor (1097 aa).

The segment at 32–122 (DLHDLSKAEL…SLELSVVEPQ (91 aa)) is interaction with SIN3A. Residues 43–57 (APQLIMLANVALTGE) form an interaction with SIN3B region. 2 disordered regions span residues 83-103 (NFSD…KGEP) and 127-159 (ASGA…TKPF). A compositionally biased stretch (acidic residues) spans 86–96 (DSEEGEGLEES). The segment at 145–418 (PGAEDKGKSS…KSKHPTCPNK (274 aa)) is interaction with ZFP90. The segment at 159–181 (FRCKPCQYEAESEEQFVHHIRVH) adopts a C2H2-type 1 zinc-finger fold. Residues 201–212 (SGSSTAEEGDFS) are required for binding to the neuron-restrictive silencer element. C2H2-type zinc fingers lie at residues 216–238 (IRCD…LKHH), 248–270 (YKCI…LRNH), 276–298 (YTCG…VRTH), 304–326 (YKCE…MRTH), 332–355 (FKCD…RQVH), 361–383 (LNCP…VELH), and 389–412 (FNCP…KSKH). Basic and acidic residues predominate over residues 452-479 (KIKGDVAGKKNEKSVKAEKRDVSKEKKP). 4 disordered regions span residues 452-642 (KIKG…MEGA), 774-837 (KEPV…EQVL), 853-938 (ESVS…NGKH), and 961-1049 (GINS…NAKE). Over residues 480–490 (SNNVSVIQVTT) the composition is skewed to polar residues. 2 stretches are compositionally biased toward basic and acidic residues: residues 495–504 (SVTEVKEMDV) and 559–570 (PKGDSKVEENKK). Basic residues predominate over residues 577–593 (KSTKKKTLKNKSSKKSS). Basic and acidic residues predominate over residues 803–836 (PPLHMEPISKKPPLRKDKKEKSNMQSERARKEQV). Phosphoserine is present on Ser864. The span at 913–930 (INESTHISSSGQNLNTPE) shows a compositional bias: polar residues. Position 971 is a phosphoserine (Ser971). The interaction with RCOR1 stretch occupies residues 1009-1087 (EGIHSHEGSD…HLNRHLVNVY (79 aa)). A C2H2-type 9 zinc finger spans residues 1060 to 1082 (FVCIFCDRSFRKGKDYSKHLNRH).

As to quaternary structure, isoform 1 and isoform 3 form heterodimers. Isoform 3: Forms homodimers and homooligomers; binds to the neuron-restrictive silencer element (NRSE) as monomer. Interacts with SIN3A, SIN3B and RCOR1. Interacts with CDYL. Interacts with EHMT1 and EHMT2 only in the presence of CDYL. Part of a complex containing at least CDYL, REST, WIZ, SETB1, EHMT1 and EHMT2. Interacts (via zinc-finger DNA-binding domain) with ZFP90 (via N- and C-termini); the interaction inhibits REST repressor activity. Interacts (via C2H2-type zinc finger 5) with PRICKLE1. Interacts with FBXW11 and BTRC. Interacts with USP7. Post-translationally, O-glycosylated. In terms of processing, phosphorylated; phosphorylation is required for ubiquitination. Ubiquitinated; ubiquitination is mediated by BTRC and leads to proteasomal degradation in G2 phase. Ubiquitination increases during neuronal differentiation. Deubiquitinated by USP7; leading to its stabilization and promoting the maintenance of neural progenitor cells. In terms of tissue distribution, expressed in neurons of the prefrontal cortex, in hippocampal pyramidal neurons, dentate gyrus granule neurons and cerebellar Purkinje and granule neurons (at protein level). Expressed in dopaminergic neurons of the substantia nigra (at protein level). Expressed in neural progenitor cells (at protein level). In patients suffering from Alzheimer disease, frontotemporal dementia or dementia with Lewy bodies, decreased nuclear levels have been observed in neurons of the prefrontal cortex and the hippocampus, but not in neurons of the dentate gyrus and cerebellum (at protein level). In patients with Parkinson disease or dementia with Lewy bodies, decreased nuclear levels have been observed in dopaminergic neurons and in cortical neurons and localization to Lewy bodies and pale bodies was detected (at protein level). Expressed at higher levels in weakly invasive breast cancer cell lines and at lower levels in highly invasive breast cancer lines (at protein level). Ubiquitous. Expressed at higher levels in the tissues of the lymphocytic compartment, including spleen, thymus, peripheral blood lymphocytes and ovary.

The protein localises to the nucleus. The protein resides in the cytoplasm. Its function is as follows. Transcriptional repressor which binds neuron-restrictive silencer element (NRSE) and represses neuronal gene transcription in non-neuronal cells. Restricts the expression of neuronal genes by associating with two distinct corepressors, SIN3A and RCOR1, which in turn recruit histone deacetylase to the promoters of REST-regulated genes. Mediates repression by recruiting the BHC complex at RE1/NRSE sites which acts by deacetylating and demethylating specific sites on histones, thereby acting as a chromatin modifier. Transcriptional repression by REST-CDYL via the recruitment of histone methyltransferase EHMT2 may be important in transformation suppression. Represses the expression of SRRM4 in non-neural cells to prevent the activation of neural-specific splicing events and to prevent production of REST isoform 3. Repressor activity may be inhibited by forming heterodimers with isoform 3, thereby preventing binding to NRSE or binding to corepressors and leading to derepression of target genes. Also maintains repression of neuronal genes in neural stem cells, and allows transcription and differentiation into neurons by dissociation from RE1/NRSE sites of target genes. Thereby is involved in maintaining the quiescent state of adult neural stem cells and preventing premature differentiation into mature neurons. Plays a role in the developmental switch in synaptic NMDA receptor composition during postnatal development, by repressing GRIN2B expression and thereby altering NMDA receptor properties from containing primarily GRIN2B to primarily GRIN2A subunits. Acts as a regulator of osteoblast differentiation. Key repressor of gene expression in hypoxia; represses genes in hypoxia by direct binding to an RE1/NRSE site on their promoter regions. May also function in stress resistance in the brain during aging; possibly by regulating expression of genes involved in cell death and in the stress response. Repressor of gene expression in the hippocampus after ischemia by directly binding to RE1/NRSE sites and recruiting SIN3A and RCOR1 to promoters of target genes, thereby promoting changes in chromatin modifications and ischemia-induced cell death. After ischemia, might play a role in repression of miR-132 expression in hippocampal neurons, thereby leading to neuronal cell death. Negatively regulates the expression of SRRM3 in breast cancer cell lines. In terms of biological role, binds to the 3' region of the neuron-restrictive silencer element (NRSE), with lower affinity than full-length REST isoform 1. Exhibits weaker repressor activity compared to isoform 1. May negatively regulate the repressor activity of isoform 1 by binding to isoform 1, thereby preventing its binding to NRSE and leading to derepression of target genes. However, in another study, does not appear to be implicated in repressor activity of a NRSE motif-containing reporter construct nor in inhibitory activity on the isoform 1 transcriptional repressor activity. Post-transcriptional inactivation of REST by SRRM4-dependent alternative splicing into isoform 3 is required in mechanosensory hair cells in the inner ear for derepression of neuronal genes and hearing. This is RE1-silencing transcription factor (REST) from Homo sapiens (Human).